Consider the following 673-residue polypeptide: Potassium voltage-gated channel subfamily KQT member 1 (673 aa).

2 disordered regions span residues 1-28 and 61-80; these read MAAA…RGSA and GPSS…LGPR. Residues 1–118 are Cytoplasmic-facing; the sequence is MAAATSPPRA…YNFLERPTGW (118 aa). The residue at position 27 (S27) is a Phosphoserine. The span at 66–75 shows a compositional bias: low complexity; it reads AAPAASPAAA. The helical transmembrane segment at 119–140 threads the bilayer; that stretch reads KCFVYHFAVFLIVLVCLIFSVL. Topologically, residues 141–151 are extracellular; it reads STIEQYVALAT. A helical transmembrane segment spans residues 152-174; it reads GTLFWMEIVLVVFFGTEYAVRLW. At 175–190 the chain is on the cytoplasmic side; it reads SAGCRSKYVGIWGRLR. The helical transmembrane segment at 191-216 threads the bilayer; it reads FARKPISIIDLIVVVASMVVLCVGSK. Residues 217–224 are Extracellular-facing; the sequence is GQVFATSA. Residues 225–240 form a helical; Voltage-sensor membrane-spanning segment; sequence IRGIRFLQILRMLHVD. Residues 236-244 are interaction with KCNE3; it reads MLHVDRQGG. Residues 241–258 are Cytoplasmic-facing; it reads RQGGTWRLLGSVVFIHRQ. Q242 is an a 1,2-diacyl-sn-glycero-3-phospho-(1D-myo-inositol-4,5-bisphosphate) binding site. A helical membrane pass occupies residues 259–281; that stretch reads ELITTLYIGFLGLIFSSYFVYLA. The Extracellular segment spans residues 282–297; it reads EKDAVNESGQVEFGSY. N287 carries N-linked (GlcNAc...) asparagine glycosylation. An intramembrane region (pore-forming) is located at residues 298–318; it reads ADALWWGVVTVTTIGYGDKVP. Topologically, residues 319–320 are extracellular; it reads QT. A helical transmembrane segment spans residues 321–346; sequence WVGKTIASCFSVFAISFFALPAGILG. Residues 347–673 lie on the Cytoplasmic side of the membrane; it reads SGFALKVQQK…VPGRGPEEGS (327 aa). Positions 368–380 are interaction with CALM; sequence AAASLIQTAWRCY. S405 and S407 each carry phosphoserine. Residues 514 to 528 form an interaction with CALM; calcium-dependent region; it reads KVIRRMQYFVAKKKF. The interval 534–571 is interaction with KCNE1 C-terminus; it reads PYDVRDVIEQYSQGHLNLMVRIKELQRRLDQSIGRPAL. The tract at residues 587 to 615 is interaction with AKAP9; the sequence is IGARLNRVEDKVTQLDQRLELITDMLQQL. The C-terminal assembly domain (tetramerization) stretch occupies residues 588 to 619; it reads GARLNRVEDKVTQLDQRLELITDMLQQLLSLH. The segment at 619–673 is disordered; it reads HRGGTPGSRAPGGGGAQVAQPCSGGSINPELFLPSNALPTYEQLTVPGRGPEEGS. Residues 622–634 are compositionally biased toward gly residues; sequence GTPGSRAPGGGGA.

Belongs to the potassium channel family. KQT (TC 1.A.1.15) subfamily. Kv7.1/KCNQ1 sub-subfamily. As to quaternary structure, tetramer. Heterotetramer with KCNE1; targets to the membrane raft. Interacts (via C-terminus) with CALM; forms a heterooctameric structure (with 4:4 KCNQ1:CALM stoichiometry) in a calcium-independent manner. Interacts with AKAP9; targets protein kinase A (PKA) catalytic and regulatory subunits and protein phosphatase 1 (PP1) to the KCNQ1-KCNE1 complex, allowing PKA-mediated phosphorylation and increase of delayed rectifier potassium channel activity. Interacts with KCNE2; form a heterooligomer complex that targets to the membrane raft and leading to currents with an apparently instantaneous activation, a rapid deactivation process and a linear current-voltage relationship and decreases the amplitude of the outward current. Interacts with AP2M1; mediates estrogen-induced internalization via clathrin-coated vesicles. Interacts with NEDD4L; promotes internalization and decreases I(Ks) currents. Interacts with USP2; counteracts the NEDD4L-specific down-regulation of I(Ks) and restore plasma membrane localization. Heterotetramer with KCNQ5; has a voltage-gated potassium channel activity. Interacts with KCNE3; four KCNE3 molecules are bound to one KCNQ1 tetramer (4:4 KCNQ1:KCNE3 stoichiometry); alters membrane raft localization; affects KCNQ1 structure and gating properties. Interacts with KCNE4; impairs KCNQ1 localization in lipid rafts and inhibits voltage-gated potassium channel activity. Interacts with KCNE5; impairs KCNQ1 localization in lipid rafts and only conducts current upon strong and continued depolarization. Interacts with SLC5A3; forms coregulatory channel-transporter complexes that modulate Na(+)-coupled myo-inositol influx through the transporter. In terms of processing, ubiquitinated by NEDD4L; promotes internalization. The ubiquitinylated form is internalized through a clathrin-mediated endocytosis by interacting with AP2M1 and is recycled back to the cell membrane via RAB4A and RAB11A. Deubiquitinated by USP2; counteracts the NEDD4L-specific down-regulation of I(Ks) and restores the membrane localization.

The protein resides in the cell membrane. The protein localises to the cytoplasmic vesicle membrane. Its subcellular location is the early endosome. It localises to the membrane raft. It is found in the endoplasmic reticulum. The protein resides in the basolateral cell membrane. The protein localises to the apical cell membrane. The enzyme catalyses K(+)(in) = K(+)(out). Its activity is regulated as follows. PIP2 molecule is essential to activate KCNQ channels by inducing the coupling of the voltage-sensing domain (VSD) and the pore-forming domain (PD). Upon channel activation, PIP2 disrupts the VSD-calmodulin/CALM interactions, causing the release of CALM from the VSD which triggers the opening of the gate. Calcium potentiates KCNQ1 channel current through calcium-bound CALM. Calcium-bound CALM competes with PIP2 to stabilize the channel open state. Its function is as follows. Pore-forming subunit of the voltage-gated potassium (Kv) channel involved in the regulation of cardiomyocyte excitability and important in normal development and functions of myocardium, inner ear, stomach and colon. Associates with KCNE beta subunits that modulates current kinetics. Induces a voltage-dependent by rapidly activating and slowly deactivating potassium-selective outward current. Also promotes a delayed voltage activated potassium current showing outward rectification characteristic. During beta-adrenergic receptor stimulation participates in cardiac repolarization by associating with KCNE1 to form the I(Ks) cardiac potassium current that increases the amplitude and slows down the activation kinetics of outward potassium current I(Ks). Muscarinic agonist oxotremorine-M strongly suppresses KCNQ1/KCNE1 current. When associated with KCNE3, forms the potassium channel that is important for cyclic AMP-stimulated intestinal secretion of chloride ions. This interaction with KCNE3 is reduced by 17beta-estradiol, resulting in the reduction of currents. During conditions of increased substrate load, maintains the driving force for proximal tubular and intestinal sodium ions absorption, gastric acid secretion, and cAMP-induced jejunal chloride ions secretion. Allows the provision of potassium ions to the luminal membrane of the secretory canaliculus in the resting state as well as during stimulated acid secretion. When associated with KCNE2, forms a heterooligomer complex leading to currents with an apparently instantaneous activation, a rapid deactivation process and a linear current-voltage relationship and decreases the amplitude of the outward current. When associated with KCNE4, inhibits voltage-gated potassium channel activity. When associated with KCNE5, this complex only conducts current upon strong and continued depolarization. Also forms a heterotetramer with KCNQ5 that has a voltage-gated potassium channel activity. Binds with phosphatidylinositol 4,5-bisphosphate. KCNQ1-KCNE2 channel associates with Na(+)-coupled myo-inositol symporter in the apical membrane of choroid plexus epithelium and regulates the myo-inositol gradient between blood and cerebrospinal fluid with an impact on neuron excitability. The protein is Potassium voltage-gated channel subfamily KQT member 1 of Sus scrofa (Pig).